We begin with the raw amino-acid sequence, 172 residues long: RNA silencing suppressor p19 (172 aa).

Positions 1-20 are enriched in basic and acidic residues; sequence MERAIQGNDAREQANSERWD. The tract at residues 1 to 38 is disordered; sequence MERAIQGNDAREQANSERWDGGSGSSTSPFQLPDESPS.

The protein belongs to the tombusvirus protein p19 family. In terms of assembly, homodimer.

Functionally, viral suppressor of RNA silencing which binds specifically to silencing RNAs (siRNAs). Acts as a molecular caliper to specifically select siRNAs based on the length of the duplex region of the RNA. In Tomato bushy stunt virus (strain type) (TBSV), this protein is RNA silencing suppressor p19.